Here is a 358-residue protein sequence, read N- to C-terminus: Magnesium-protoporphyrin IX monomethyl ester [oxidative] cyclase 1 (358 aa).

Belongs to the AcsF family. Fe cation serves as cofactor.

The enzyme catalyses Mg-protoporphyrin IX 13-monomethyl ester + 3 NADPH + 3 O2 + 2 H(+) = 3,8-divinyl protochlorophyllide a + 3 NADP(+) + 5 H2O. The protein operates within porphyrin-containing compound metabolism; chlorophyll biosynthesis (light-independent). In terms of biological role, catalyzes the formation of the isocyclic ring in chlorophyll biosynthesis. Mediates the cyclase reaction, which results in the formation of divinylprotochlorophyllide (Pchlide) characteristic of all chlorophylls from magnesium-protoporphyrin IX 13-monomethyl ester (MgPMME). The polypeptide is Magnesium-protoporphyrin IX monomethyl ester [oxidative] cyclase 1 (Synechocystis sp. (strain ATCC 27184 / PCC 6803 / Kazusa)).